A 527-amino-acid polypeptide reads, in one-letter code: Glutamate--cysteine ligase (527 aa).

This sequence belongs to the glutamate--cysteine ligase type 1 family. Type 1 subfamily.

The catalysed reaction is L-cysteine + L-glutamate + ATP = gamma-L-glutamyl-L-cysteine + ADP + phosphate + H(+). The protein operates within sulfur metabolism; glutathione biosynthesis; glutathione from L-cysteine and L-glutamate: step 1/2. This is Glutamate--cysteine ligase from Bordetella petrii (strain ATCC BAA-461 / DSM 12804 / CCUG 43448).